Reading from the N-terminus, the 191-residue chain is Small ribosomal subunit protein uS9c (191 aa).

Positions 166-191 are disordered; that stretch reads TQDSRVKERRKYGLKKARKASQYHKR. Residues 172 to 191 are compositionally biased toward basic residues; sequence KERRKYGLKKARKASQYHKR.

This sequence belongs to the universal ribosomal protein uS9 family.

It is found in the plastid. It localises to the chloroplast. The protein is Small ribosomal subunit protein uS9c (rps9) of Chlamydomonas reinhardtii (Chlamydomonas smithii).